The chain runs to 298 residues: ATP phosphoribosyltransferase (298 aa).

The protein belongs to the ATP phosphoribosyltransferase family. Long subfamily. Mg(2+) is required as a cofactor.

The protein resides in the cytoplasm. It carries out the reaction 1-(5-phospho-beta-D-ribosyl)-ATP + diphosphate = 5-phospho-alpha-D-ribose 1-diphosphate + ATP. The protein operates within amino-acid biosynthesis; L-histidine biosynthesis; L-histidine from 5-phospho-alpha-D-ribose 1-diphosphate: step 1/9. Its activity is regulated as follows. Feedback inhibited by histidine. Catalyzes the condensation of ATP and 5-phosphoribose 1-diphosphate to form N'-(5'-phosphoribosyl)-ATP (PR-ATP). Has a crucial role in the pathway because the rate of histidine biosynthesis seems to be controlled primarily by regulation of HisG enzymatic activity. The sequence is that of ATP phosphoribosyltransferase from Aliivibrio fischeri (strain MJ11) (Vibrio fischeri).